The primary structure comprises 163 residues: Jun dimerization protein 2 (163 aa).

2 disordered regions span residues 1 to 20 (MMPGQIPDPSVTTGSLPGLG) and 58 to 89 (GKRPQPVKSELDEEEERRKRRREKNKVAAARC). A Glycyl lysine isopeptide (Lys-Gly) (interchain with G-Cter in SUMO2) cross-link involves residue Lys65. The region spanning 72–135 (EERRKRRREK…QQLILMLNRH (64 aa)) is the bZIP domain. The interval 74-96 (RRKRRREKNKVAAARCRNKKKER) is basic motif. The tract at residues 100 to 128 (LQRESERLELMNAELKTQIEELKQERQQL) is leucine-zipper. Thr148 bears the Phosphothreonine; by MAPK8 mark.

This sequence belongs to the bZIP family. ATF subfamily. As to quaternary structure, forms a homodimer or heterodimer with JUN, JUNB, JUND, CEBPG and ATF2 thereby inhibiting transactivation by JUN, ATF2 and CEBPG. Binds multiple DNA elements such as cAMP-response element (CRE) and TPA response element (TRE) either as homodimer or heterodimer. Interacts with IRF2BP1. In terms of processing, phosphorylation of Thr-148 by MAPK8 in response to different stress conditions such as, UV irradiation, oxidatives stress and anisomycin treatments. Post-translationally, polyubiquitinated; probably by IRF2BP1.

Its subcellular location is the nucleus. Component of the AP-1 transcription factor that represses transactivation mediated by the Jun family of proteins. Involved in a variety of transcriptional responses associated with AP-1 such as UV-induced apoptosis, cell differentiation, tumorigenesis and antitumogeneris. Can also function as a repressor by recruiting histone deacetylase 3/HDAC3 to the promoter region of JUN. May control transcription via direct regulation of the modification of histones and the assembly of chromatin. In Homo sapiens (Human), this protein is Jun dimerization protein 2 (JDP2).